A 348-amino-acid chain; its full sequence is Nitrogenase vanadium-iron protein beta chain (348 aa).

Positions 31, 56, 115, and 153 each coordinate [8Fe-7S] cluster.

The protein belongs to the NifD/NifK/NifE/NifN family. In terms of assembly, hexamer of two alpha, two beta, and two delta chains. It depends on [8Fe-7S] cluster as a cofactor.

The catalysed reaction is N2 + 8 reduced [2Fe-2S]-[ferredoxin] + 16 ATP + 16 H2O = H2 + 8 oxidized [2Fe-2S]-[ferredoxin] + 2 NH4(+) + 16 ADP + 16 phosphate + 6 H(+). In terms of biological role, this vanadium-iron protein is part of the nitrogenase complex that catalyzes the key enzymatic reactions in nitrogen fixation. In Azorhizophilus paspali (Azotobacter paspali), this protein is Nitrogenase vanadium-iron protein beta chain (vnfK).